Reading from the N-terminus, the 431-residue chain is Phosphoribosylamine--glycine ligase (431 aa).

The region spanning 108–315 (KDFLARHKIP…LVLLIEAALA (208 aa)) is the ATP-grasp domain. 134 to 195 (LREKGAPIVI…EEFLDGEEAS (62 aa)) is a binding site for ATP. Residues glutamate 285 and asparagine 287 each contribute to the Mg(2+) site.

Belongs to the GARS family. Requires Mg(2+) as cofactor. It depends on Mn(2+) as a cofactor.

The enzyme catalyses 5-phospho-beta-D-ribosylamine + glycine + ATP = N(1)-(5-phospho-beta-D-ribosyl)glycinamide + ADP + phosphate + H(+). It participates in purine metabolism; IMP biosynthesis via de novo pathway; N(1)-(5-phospho-D-ribosyl)glycinamide from 5-phospho-alpha-D-ribose 1-diphosphate: step 2/2. This Pseudomonas syringae pv. tomato (strain ATCC BAA-871 / DC3000) protein is Phosphoribosylamine--glycine ligase.